Consider the following 1749-residue polypeptide: Kinase non-catalytic C-lobe domain-containing protein 1 (1749 aa).

One can recognise a KIND 1 domain in the interval Val-37 to Glu-217. Disordered regions lie at residues Val-210–Arg-275 and Cys-361–Leu-435. Basic and acidic residues-rich tracts occupy residues Leu-363–Leu-373 and Ala-410–Glu-430. The region spanning Val-444 to Glu-608 is the KIND 2 domain. Disordered regions lie at residues Ala-689–Asp-871 and Gln-962–Ser-1061. Residues Glu-702–Leu-717 are compositionally biased toward basic and acidic residues. Composition is skewed to low complexity over residues Gln-739–Ala-748 and Pro-766–Gly-779. Over residues His-823–Arg-833 the composition is skewed to basic residues. Positions Gly-853–Asp-871 are enriched in basic and acidic residues. The residue at position 964 (Ser-964) is a Phosphoserine. Over residues Ser-980 to Arg-990 the composition is skewed to low complexity. Residues Arg-1005–Asp-1019 are compositionally biased toward polar residues. Residues Val-1040 to Pro-1056 show a composition bias toward basic and acidic residues. The stretch at Gln-1133 to Lys-1190 forms a coiled coil. The N-terminal Ras-GEF domain maps to Lys-1246–Met-1371. The region spanning Ser-1468–Ala-1719 is the Ras-GEF domain.

In terms of assembly, interacts (via KIND2) with MAP2; the interaction enhances MAP2 phosphorylation and localizes KNDC1 to dendrites. Expressed specifically in the cerebral cortex.

The protein localises to the cell projection. It is found in the dendrite. The protein resides in the perikaryon. Its function is as follows. RAS-Guanine nucleotide exchange factor (GEF) that controls the negative regulation of neuronal dendrite growth by mediating a signaling pathway linking RAS and MAP2. May be involved in cellular senescence. The chain is Kinase non-catalytic C-lobe domain-containing protein 1 from Homo sapiens (Human).